We begin with the raw amino-acid sequence, 117 residues long: Large ribosomal subunit protein uL22 (117 aa).

The protein belongs to the universal ribosomal protein uL22 family. As to quaternary structure, part of the 50S ribosomal subunit.

This protein binds specifically to 23S rRNA; its binding is stimulated by other ribosomal proteins, e.g. L4, L17, and L20. It is important during the early stages of 50S assembly. It makes multiple contacts with different domains of the 23S rRNA in the assembled 50S subunit and ribosome. Its function is as follows. The globular domain of the protein is located near the polypeptide exit tunnel on the outside of the subunit, while an extended beta-hairpin is found that lines the wall of the exit tunnel in the center of the 70S ribosome. The protein is Large ribosomal subunit protein uL22 of Staphylococcus epidermidis (strain ATCC 35984 / DSM 28319 / BCRC 17069 / CCUG 31568 / BM 3577 / RP62A).